Reading from the N-terminus, the 552-residue chain is MTTFLKSLIFLQDSCLAFLSLMFHRGSSEDAAEALKKLETSINGARISFDTTWTREFRSLFIVPLFKCLVAFCLIISLLVFIEGIYMNLVVLYVKVFERKPEKVYRWEAMQEDIELGHETYPMVLVQIPMYNEKEVLQLSIGAACRLIWPLDRLIVQVLDDSTDQTIKELVNTECAKWESKGVNIKCERRDNRNGYKAGALKEGMKHNYVKLCNYVVIFDADFQPEPDYLQHSVPFLVHNPEVALVQARWRFMNANKCLMTRMQEMSLNYHFMAEQESGSTRHAFFSFNGTAGVWRMAAMEEAGGWHDRTTVEDMDLAVRAGLLGWKFVFLNDLTVKSELPSKFKAFRFQQHRWSCGPANLFRKMIMEIIRNKRVTIWKKLYLVYSFFFLRKIIVHCFTFIFYCVILPTSVFFPEVNIPAWSTFYIPSMITLCIVIATPRSFYLVIFWILFENVMSMHRTKGTFIGILERQRVNEWVVTEKLGDALKTKLLPRIGKPSNMFLERVNSKEIMVGIYILCCACYGLFFGNTLLYLYLFMQAVAFLISGVGFVGT.

A helical transmembrane segment spans residues 62–82; sequence IVPLFKCLVAFCLIISLLVFI. D161 is an active-site residue. Residues D220 and D222 each contribute to the substrate site. The active site involves D314. Helical transmembrane passes span 393–413, 430–450, 509–529, and 530–550; these read IIVH…SVFF, ITLC…FWIL, EIMV…FGNT, and LLYL…VGFV.

Belongs to the glycosyltransferase 2 family. Plant cellulose synthase-like A subfamily.

Its subcellular location is the golgi apparatus membrane. It carries out the reaction GDP-mannose + (glucomannan)n = GDP + (glucomannan)n+1.. Probable mannan synthase which consists of a 4-beta-mannosyltransferase activity on mannan using GDP-mannose. The beta-1,4-mannan product is the backbone for galactomannan synthesis by galactomannan galactosyltransferase. Galactomannan is a noncellulosic polysaccharides of plant cell wall. The sequence is that of Probable glucomannan 4-beta-mannosyltransferase 10 from Arabidopsis thaliana (Mouse-ear cress).